The chain runs to 889 residues: Cytoplasmic aconitate hydratase (889 aa).

Substrate contacts are provided by residues Q86 and 205-207 (DSH). [4Fe-4S] cluster-binding residues include C437, C503, and C506. Residues R536, R541, R699, and 779–780 (SR) contribute to the substrate site.

It belongs to the aconitase/IPM isomerase family. As to quaternary structure, interacts (when associated with the 4Fe-4S) with FBXL5. Interacts with frataxin(81-210). [4Fe-4S] cluster is required as a cofactor.

It localises to the cytoplasm. Its subcellular location is the cytosol. The enzyme catalyses citrate = D-threo-isocitrate. Its function is as follows. Bifunctional iron sensor that switches between 2 activities depending on iron availability. Iron deprivation, promotes its mRNA binding activity through which it regulates the expression of genes involved in iron uptake, sequestration and utilization. Binds to iron-responsive elements (IRES) in the untranslated region of target mRNAs preventing for instance the translation of ferritin and aminolevulinic acid synthase and stabilizing the transferrin receptor mRNA. Functionally, conversely, when cellular iron levels are high, binds a 4Fe-4S cluster which precludes RNA binding activity and promotes the aconitase activity, the isomerization of citrate to isocitrate via cis-aconitate. The chain is Cytoplasmic aconitate hydratase (Aco1) from Rattus norvegicus (Rat).